Reading from the N-terminus, the 128-residue chain is Fluoride-specific ion channel FluC (128 aa).

4 helical membrane-spanning segments follow: residues 3–23 (FTTI…RSFT), 34–54 (LSFP…IGFL), 65–85 (INLK…FSTF), and 102–122 (FLNI…GFWI). 2 residues coordinate Na(+): G77 and T80.

It belongs to the fluoride channel Fluc/FEX (TC 1.A.43) family.

Its subcellular location is the cell inner membrane. It catalyses the reaction fluoride(in) = fluoride(out). Na(+) is not transported, but it plays an essential structural role and its presence is essential for fluoride channel function. Functionally, fluoride-specific ion channel. Important for reducing fluoride concentration in the cell, thus reducing its toxicity. The protein is Fluoride-specific ion channel FluC of Campylobacter fetus subsp. fetus (strain 82-40).